We begin with the raw amino-acid sequence, 463 residues long: Bifunctional protein HldE (463 aa).

Residues 1–313 (MTGPMAVRTD…RALAALPDTD (313 aa)) form a ribokinase region. Asp-258 is a catalytic residue. A cytidylyltransferase region spans residues 331-463 (AAGGCFDLLH…LLARAAEGAR (133 aa)).

It in the N-terminal section; belongs to the carbohydrate kinase PfkB family. In the C-terminal section; belongs to the cytidylyltransferase family. In terms of assembly, homodimer.

It carries out the reaction D-glycero-beta-D-manno-heptose 7-phosphate + ATP = D-glycero-beta-D-manno-heptose 1,7-bisphosphate + ADP + H(+). The enzyme catalyses D-glycero-beta-D-manno-heptose 1-phosphate + ATP + H(+) = ADP-D-glycero-beta-D-manno-heptose + diphosphate. It participates in nucleotide-sugar biosynthesis; ADP-L-glycero-beta-D-manno-heptose biosynthesis; ADP-L-glycero-beta-D-manno-heptose from D-glycero-beta-D-manno-heptose 7-phosphate: step 1/4. It functions in the pathway nucleotide-sugar biosynthesis; ADP-L-glycero-beta-D-manno-heptose biosynthesis; ADP-L-glycero-beta-D-manno-heptose from D-glycero-beta-D-manno-heptose 7-phosphate: step 3/4. In terms of biological role, catalyzes the phosphorylation of D-glycero-D-manno-heptose 7-phosphate at the C-1 position to selectively form D-glycero-beta-D-manno-heptose-1,7-bisphosphate. Functionally, catalyzes the ADP transfer from ATP to D-glycero-beta-D-manno-heptose 1-phosphate, yielding ADP-D-glycero-beta-D-manno-heptose. This chain is Bifunctional protein HldE, found in Streptomyces coelicolor (strain ATCC BAA-471 / A3(2) / M145).